Reading from the N-terminus, the 128-residue chain is Azurin (128 aa).

The 128-residue stretch at 1 to 128 (AECKVTVDST…AMMKGTVTLK (128 aa)) folds into the Plastocyanin-like domain. Residues C3 and C26 are joined by a disulfide bond. The Cu cation site is built by H46, C112, H117, and M121.

Its subcellular location is the periplasm. Transfers electrons from cytochrome c551 to cytochrome oxidase. This is Azurin from Pseudomonas fluorescens biotype C.